The primary structure comprises 972 residues: C-1-tetrahydrofolate synthase, mitochondrial (972 aa).

Residues 1 to 55 (MNVMVSFNQLRNYFLESNSLRPSKWLFQSYGTSSSANILNGKLLARKLQRSVAEE) constitute a mitochondrion transit peptide. The methylenetetrahydrofolate dehydrogenase and cyclohydrolase stretch occupies residues 56–340 (VQALKAKDRN…DLNPLELKKP (285 aa)). Substrate-binding positions include 84-88 (YVRMK) and 131-133 (VQL). Residues 202–204 (GRS) and Ser-227 each bind NADP(+). Residue 299-303 (PGGVG) participates in substrate binding. The interval 341-972 (VPSDIEIANS…CENGEIVGLS (632 aa)) is formyltetrahydrofolate synthetase. Position 405–412 (405–412 (TPFGEGKS)) interacts with ATP.

The protein in the N-terminal section; belongs to the tetrahydrofolate dehydrogenase/cyclohydrolase family. It in the C-terminal section; belongs to the formate--tetrahydrofolate ligase family. As to quaternary structure, homodimer.

The protein resides in the mitochondrion. It catalyses the reaction (6R)-5,10-methylene-5,6,7,8-tetrahydrofolate + NADP(+) = (6R)-5,10-methenyltetrahydrofolate + NADPH. The enzyme catalyses (6R)-5,10-methenyltetrahydrofolate + H2O = (6R)-10-formyltetrahydrofolate + H(+). It carries out the reaction (6S)-5,6,7,8-tetrahydrofolate + formate + ATP = (6R)-10-formyltetrahydrofolate + ADP + phosphate. It functions in the pathway one-carbon metabolism; tetrahydrofolate interconversion. Functionally, mitochondrial isozyme of C-1-tetrahydrofolate synthase. The trifunctional enzyme catalyzes the interconversion of the one-carbon derivatives of tetrahydrofolate (THF) between different oxidation states by the enzymatic activities 10-formyltetrahydrofolate synthetase, 5,lO-methenyltetrahydrofolate cyclohydrolase, and 5,lO-methylenetetrahydrofolate dehydrogenase. The protein is C-1-tetrahydrofolate synthase, mitochondrial (ade9) of Schizosaccharomyces pombe (strain 972 / ATCC 24843) (Fission yeast).